Here is a 217-residue protein sequence, read N- to C-terminus: Growth hormone variant (217 aa).

The signal sequence occupies residues 1 to 26 (MAAGSWTCLILAIALLCLPWLQEGSA). Disulfide bonds link Cys79/Cys191 and Cys208/Cys215. Ser132 and Ser176 each carry phosphoserine.

It belongs to the somatotropin/prolactin family. In terms of tissue distribution, expressed in the placenta.

The protein localises to the secreted. In terms of biological role, plays an important role in growth control. Its major role in stimulating body growth is to stimulate the liver and other tissues to secrete IGF1. It stimulates both the differentiation and proliferation of myoblasts. It also stimulates amino acid uptake and protein synthesis in muscle and other tissues. This chain is Growth hormone variant (GH2), found in Macaca mulatta (Rhesus macaque).